The following is a 132-amino-acid chain: ATP synthase epsilon chain (132 aa).

Belongs to the ATPase epsilon chain family. F-type ATPases have 2 components, CF(1) - the catalytic core - and CF(0) - the membrane proton channel. CF(1) has five subunits: alpha(3), beta(3), gamma(1), delta(1), epsilon(1). CF(0) has three main subunits: a, b and c.

Its subcellular location is the cell membrane. Functionally, produces ATP from ADP in the presence of a proton gradient across the membrane. This Desulfitobacterium hafniense (strain Y51) protein is ATP synthase epsilon chain.